The primary structure comprises 234 residues: Transcription factor bHLH160 (234 aa).

Residues 1-13 (MSSQPNHQTSISS) show a composition bias toward polar residues. The tract at residues 1 to 67 (MSSQPNHQTS…GAAKKQDHNA (67 aa)) is disordered. Residues 27-37 (IVEKESAEKDT) show a composition bias toward basic and acidic residues. The bHLH domain occupies 60–115 (AKKQDHNAKERLRRMRLHASYLTLGTLLPDHSSSSSKKKWSAPSIIDNVITYIPKL).

The protein belongs to the bHLH protein family.

The protein localises to the nucleus. The polypeptide is Transcription factor bHLH160 (Arabidopsis thaliana (Mouse-ear cress)).